The following is a 144-amino-acid chain: Bacilliredoxin BrxA (144 aa).

Catalysis depends on nucleophile residues Cys53 and Cys55. S-bacillithiol cysteine disulfide is present on Cys53. The short motif at Cys53–Cys55 is the CXC active site motif element. Cys53 and Cys55 form a disulfide bridge.

This sequence belongs to the bacilliredoxin family. N-terminal Cys of the CXC active site motif can react with bacillithiol (BSH) to form mixed disulfides. S-bacillithiolation protects Cys residues against overoxidation by acting as a redox switch in response to oxidative stress.

In terms of biological role, S-bacillithiolation is the formation of mixed disulfide bonds between protein thiols and the general thiol reductant bacillithiol (BSH) under oxidative stress. BSH is an equivalent of glutathione (GSH) in Firmicutes. This protein is a dithiol bacilliredoxin, which debacillithiolates (removes BSH) the S-bacillithiolated OhrR (OhrR-SSB) in vitro and in vivo NaOCl-generated S-bacillithiolated MetE (MetE-SSB). Involved in maintaining redox homeostasis in response to disulfide stress conditions. Has a redox potential of -130 mV. Displays weak protein disulfide isomerase activity in vitro. This Bacillus subtilis (strain 168) protein is Bacilliredoxin BrxA.